The chain runs to 421 residues: F-box only protein 9 (421 aa).

The interval Met1 to Ala63 is disordered. The span at Ala11–Thr20 shows a compositional bias: acidic residues. A compositionally biased stretch (polar residues) spans Leu40–Arg52. A compositionally biased stretch (basic and acidic residues) spans Ala54 to Ala63. One copy of the TPR repeat lies at Ala68–Ile101. Residues Gln158 to Ala209 form the F-box domain.

In terms of assembly, part of the SCF (SKP1-CUL1-F-box) E3 ubiquitin-protein ligase complex SCF(fbxo9).

The protein localises to the cytoplasm. Its pathway is protein modification; protein ubiquitination. Its function is as follows. Substrate recognition component of a SCF (SKP1-CUL1-F-box protein) E3 ubiquitin-protein ligase complex which mediates the ubiquitination and subsequent proteasomal degradation of target proteins and acts as a regulator of mTOR signaling. This Danio rerio (Zebrafish) protein is F-box only protein 9 (fbxo9).